A 306-amino-acid polypeptide reads, in one-letter code: D-alanine--D-alanine ligase B (306 aa).

Positions 101 to 303 (KLLWQGAGLP…FSQLVVRILE (203 aa)) constitute an ATP-grasp domain. Residue 134–189 (ISALGLPLIVKPSREGSSVGMTKVVEENALQGALSLAFQHDDEILIEKWLCGPEFT) coordinates ATP. 3 residues coordinate Mg(2+): aspartate 257, glutamate 270, and asparagine 272.

It belongs to the D-alanine--D-alanine ligase family. In terms of assembly, monomer. The cofactor is Mg(2+). Requires Mn(2+) as cofactor.

The protein localises to the cytoplasm. It carries out the reaction 2 D-alanine + ATP = D-alanyl-D-alanine + ADP + phosphate + H(+). It participates in cell wall biogenesis; peptidoglycan biosynthesis. Cell wall formation. This Salmonella typhimurium (strain LT2 / SGSC1412 / ATCC 700720) protein is D-alanine--D-alanine ligase B (ddlB).